Consider the following 528-residue polypeptide: Nucleolar GTP-binding protein 1 (528 aa).

Residues 168-335 enclose the OBG-type G domain; that stretch reads RTLLVCGFPN…VKAMACDLLL (168 aa). GTP is bound by residues 174 to 181, 220 to 224, and 287 to 290; these read GFPNVGKS, DTPGI, and SKSD. The segment at 470 to 528 is disordered; that stretch reads PDSWKHRSRNSGGDIAVHVRRDSKTQVAQPPRLPSKKKARFDDKHYYDRKPKHLYRGRK. The segment covering 509–518 has biased composition (basic and acidic residues); the sequence is RFDDKHYYDR. Residues 519–528 are compositionally biased toward basic residues; sequence KPKHLYRGRK.

This sequence belongs to the TRAFAC class OBG-HflX-like GTPase superfamily. OBG GTPase family. NOG subfamily.

The protein resides in the nucleus. The protein localises to the nucleolus. Involved in the biogenesis of the 60S ribosomal subunit. This chain is Nucleolar GTP-binding protein 1 (NOG1), found in Encephalitozoon cuniculi (strain GB-M1) (Microsporidian parasite).